The sequence spans 241 residues: Acetoacetyl-CoA reductase (241 aa).

Residues 12–14 (RGI), Arg-39, and 82–86 (NAGIT) each bind NADP(+). Substrate-binding positions include Asp-88 and 141–144 (QMGQ). The Proton acceptor role is filled by Tyr-147. 177–180 (PGYI) serves as a coordination point for NADP(+). 178–179 (GY) is a substrate binding site.

This sequence belongs to the short-chain dehydrogenases/reductases (SDR) family.

The protein localises to the cytoplasm. It catalyses the reaction a (3R)-3-hydroxyacyl-CoA + NADP(+) = a 3-oxoacyl-CoA + NADPH + H(+). Its pathway is biopolymer metabolism; poly-(R)-3-hydroxybutanoate biosynthesis. In Rhizobium meliloti (strain 1021) (Ensifer meliloti), this protein is Acetoacetyl-CoA reductase.